The sequence spans 342 residues: Succinylglutamate desuccinylase (342 aa).

Zn(2+) contacts are provided by His62, Glu65, and His158. Residue Glu222 is part of the active site.

It belongs to the AspA/AstE family. Succinylglutamate desuccinylase subfamily. The cofactor is Zn(2+).

The enzyme catalyses N-succinyl-L-glutamate + H2O = L-glutamate + succinate. It participates in amino-acid degradation; L-arginine degradation via AST pathway; L-glutamate and succinate from L-arginine: step 5/5. Its function is as follows. Transforms N(2)-succinylglutamate into succinate and glutamate. This Shewanella frigidimarina (strain NCIMB 400) protein is Succinylglutamate desuccinylase.